The sequence spans 194 residues: Ferredoxin, apicoplast (194 aa).

Residues 1 to 19 constitute an apicoplast transit peptide; sequence MNIVILLLILTFSIKHSNT. The 2Fe-2S ferredoxin-type domain occupies 99 to 189; it reads YNITLRTNDG…DCVIETHKED (91 aa). Residues cysteine 135, cysteine 140, cysteine 143, and cysteine 173 each coordinate [2Fe-2S] cluster.

It belongs to the 2Fe2S plant-type ferredoxin family. The cofactor is [2Fe-2S] cluster.

Its subcellular location is the plastid. It is found in the apicoplast. Ferredoxins are iron-sulfur proteins that transfer electrons in a wide variety of metabolic reactions. By transferring electrons to 4-hydroxy-3-methylbut-2-enyl diphosphate reductase LytB/IspH, plays a role in the terminal step of the DOXP/MEP pathway for isoprenoid precursor biosynthesis. In Plasmodium falciparum (isolate 3D7), this protein is Ferredoxin, apicoplast.